The chain runs to 210 residues: Large ribosomal subunit protein uL4 (210 aa).

The interval 41–79 (MANARQGTASTKTRAEVRGGGRKPWRQKGTGRARAGSNR) is disordered. The segment covering 43-52 (NARQGTASTK) has biased composition (polar residues). The segment covering 60-71 (GGRKPWRQKGTG) has biased composition (basic residues).

This sequence belongs to the universal ribosomal protein uL4 family. Part of the 50S ribosomal subunit.

One of the primary rRNA binding proteins, this protein initially binds near the 5'-end of the 23S rRNA. It is important during the early stages of 50S assembly. It makes multiple contacts with different domains of the 23S rRNA in the assembled 50S subunit and ribosome. Functionally, forms part of the polypeptide exit tunnel. This chain is Large ribosomal subunit protein uL4, found in Cyanothece sp. (strain PCC 7425 / ATCC 29141).